Reading from the N-terminus, the 820-residue chain is LPS-assembly protein LptD (820 aa).

Residues 1 to 27 (MDLSSLPDPLRPTHSRLPARRRDRAEP) form a disordered region. Positions 13–22 (THSRLPARRR) are enriched in basic residues.

The protein belongs to the LptD family. In terms of assembly, component of the lipopolysaccharide transport and assembly complex. Interacts with LptE and LptA.

In terms of biological role, together with LptE, is involved in the assembly of lipopolysaccharide (LPS) at the surface of the outer membrane. This chain is LPS-assembly protein LptD, found in Paracidovorax citrulli (strain AAC00-1) (Acidovorax citrulli).